The sequence spans 375 residues: Chaperone protein DnaJ (375 aa).

Residues 4–69 (DLYETLGVQK…QKRAAYDRYG (66 aa)) enclose the J domain. Residues 133-211 (GKTAQIRVPT…CHGQGRVVEE (79 aa)) form a CR-type zinc finger. 8 residues coordinate Zn(2+): C146, C149, C163, C166, C185, C188, C199, and C202. 4 CXXCXGXG motif repeats span residues 146 to 153 (CDVCTGTG), 163 to 170 (CGTCQGTG), 185 to 192 (CPTCGGRG), and 199 to 206 (CTKCHGQG).

The protein belongs to the DnaJ family. Homodimer. The cofactor is Zn(2+).

It is found in the cytoplasm. Its function is as follows. Participates actively in the response to hyperosmotic and heat shock by preventing the aggregation of stress-denatured proteins and by disaggregating proteins, also in an autonomous, DnaK-independent fashion. Unfolded proteins bind initially to DnaJ; upon interaction with the DnaJ-bound protein, DnaK hydrolyzes its bound ATP, resulting in the formation of a stable complex. GrpE releases ADP from DnaK; ATP binding to DnaK triggers the release of the substrate protein, thus completing the reaction cycle. Several rounds of ATP-dependent interactions between DnaJ, DnaK and GrpE are required for fully efficient folding. Also involved, together with DnaK and GrpE, in the DNA replication of plasmids through activation of initiation proteins. In Sinorhizobium medicae (strain WSM419) (Ensifer medicae), this protein is Chaperone protein DnaJ.